We begin with the raw amino-acid sequence, 98 residues long: Integration host factor subunit alpha (98 aa).

Positions 51–71 (NFDLRDKNERPGRNPKTGEDI) are disordered. A compositionally biased stretch (basic and acidic residues) spans 53–69 (DLRDKNERPGRNPKTGE).

The protein belongs to the bacterial histone-like protein family. In terms of assembly, heterodimer of an alpha and a beta chain.

Functionally, this protein is one of the two subunits of integration host factor, a specific DNA-binding protein that functions in genetic recombination as well as in transcriptional and translational control. In Vibrio parahaemolyticus serotype O3:K6 (strain RIMD 2210633), this protein is Integration host factor subunit alpha.